The sequence spans 348 residues: Signal recognition particle receptor FtsY (348 aa).

Residues 143–150 (GVNGVGKT), 225–229 (DTSGR), and 289–292 (TKMD) each bind GTP.

The protein belongs to the GTP-binding SRP family. FtsY subfamily. Part of the signal recognition particle protein translocation system, which is composed of SRP and FtsY.

The protein resides in the cell membrane. It is found in the cytoplasm. The enzyme catalyses GTP + H2O = GDP + phosphate + H(+). Functionally, involved in targeting and insertion of nascent membrane proteins into the cytoplasmic membrane. Acts as a receptor for the complex formed by the signal recognition particle (SRP) and the ribosome-nascent chain (RNC). The protein is Signal recognition particle receptor FtsY of Mycoplasma pneumoniae (strain ATCC 29342 / M129 / Subtype 1) (Mycoplasmoides pneumoniae).